The following is a 200-amino-acid chain: Ribonuclease T2 (200 aa).

A disulfide bridge connects residues C17 and C22. The active site involves H32. The cysteines at positions 42 and 89 are disulfide-linked. N-linked (GlcNAc...) asparagine glycosylation is found at N43 and N73. Active-site residues include E82 and H86. N116 is a glycosylation site (N-linked (GlcNAc...) asparagine). 2 cysteine pairs are disulfide-bonded: C152-C188 and C170-C180.

The protein belongs to the RNase T2 family.

The protein resides in the secreted. Its subcellular location is the lysosome lumen. The protein localises to the endoplasmic reticulum lumen. It is found in the mitochondrion intermembrane space. The enzyme catalyses a ribonucleotidyl-ribonucleotide-RNA + H2O = a 3'-end 3'-phospho-ribonucleotide-RNA + a 5'-end dephospho-ribonucleoside-RNA + H(+). The catalysed reaction is an adenylyl-uridine-RNA = a 3'-end 2',3'-cyclophospho-AMP-RNA + a 5'-end dephospho-uridine-RNA. It catalyses the reaction a guanylyl-uridine-RNA = a 3'-end 2',3'-cyclophospho-GMP-RNA + a 5'-end dephospho-uridine-RNA. Inhibited by Zn(2+) and Cu(2+). Functionally, ribonuclease that plays an essential role in innate immune response by recognizing and degrading RNAs from microbial pathogens that are subsequently sensed by TLR8. Cleaves preferentially single-stranded RNA molecules between purine and uridine residues, which critically contributes to the supply of catabolic uridine and the generation of purine-2',3'-cyclophosphate-terminated oligoribonucleotides. In turn, RNase T2 degradation products promote the RNA-dependent activation of TLR8. In plasmacytoid dendritic cells, it cooperates with PLD3 or PLD4 5'-&gt;3' exonucleases to process RNA fragments and release 2',3'-cyclic guanosine monophosphate (2',3'-cGMP), a potent stimulatory ligand for TLR7. Also plays a key role in degradation of mitochondrial RNA and processing of non-coding RNA imported from the cytosol into mitochondria. Participates as well in degradation of mitochondrion-associated cytosolic rRNAs. The protein is Ribonuclease T2 (RNASET2) of Sus scrofa (Pig).